Here is a 555-residue protein sequence, read N- to C-terminus: Intraflagellar transport protein 56 (555 aa).

TPR repeat units follow at residues 57–90 (LKNL…EDPD), 151–184 (IEDQ…HRDY), and 393–426 (DDFN…KYRN).

Belongs to the IFT56 family. Component of the IFT complex B.

It localises to the cell projection. It is found in the cilium. The protein resides in the flagellum. Functionally, component of the intraflagellar transport (IFT) complex B required for transport of proteins in the motile cilium. Required for transport of specific ciliary cargo proteins related to motility, while it is neither required for IFT complex B assembly or motion nor for cilium assembly. The polypeptide is Intraflagellar transport protein 56 (Chlamydomonas reinhardtii (Chlamydomonas smithii)).